The primary structure comprises 350 residues: tRNA uridine(34) hydroxylase (350 aa).

In terms of domain architecture, Rhodanese spans 146–240 (DDPDALFIDM…YARKAREQGL (95 aa)). Cys-200 serves as the catalytic Cysteine persulfide intermediate.

Belongs to the TrhO family.

It catalyses the reaction uridine(34) in tRNA + AH2 + O2 = 5-hydroxyuridine(34) in tRNA + A + H2O. Functionally, catalyzes oxygen-dependent 5-hydroxyuridine (ho5U) modification at position 34 in tRNAs. In Shigella sonnei (strain Ss046), this protein is tRNA uridine(34) hydroxylase.